Here is a 180-residue protein sequence, read N- to C-terminus: MDDSEEDQRLPHHRDPKEFIPLDKLSELGIISWRLNPDNWENDENLKKIREARGYSYMDICDVCPEKLPNYEIKIKNFFEEHLHTDEEIRYCLEGSGYFDVRDENDQWIRVAVKKGGMIVLPAGMYHRFTLDNENYIKAMRLFVGEPVWTPYNRPHDHLPARKEYLDKLLKPEGQAVEAR.

4 residues coordinate Fe(2+): His-82, His-84, Glu-88, and His-127. Ni(2+) is bound by residues His-82, His-84, Glu-88, and His-127.

Belongs to the acireductone dioxygenase (ARD) family. Fe(2+) serves as cofactor. Requires Ni(2+) as cofactor.

The protein resides in the cytoplasm. Its subcellular location is the nucleus. It catalyses the reaction 1,2-dihydroxy-5-(methylsulfanyl)pent-1-en-3-one + O2 = 4-methylsulfanyl-2-oxobutanoate + formate + 2 H(+). The catalysed reaction is 1,2-dihydroxy-5-(methylsulfanyl)pent-1-en-3-one + O2 = 3-(methylsulfanyl)propanoate + CO + formate + 2 H(+). It functions in the pathway amino-acid biosynthesis; L-methionine biosynthesis via salvage pathway; L-methionine from S-methyl-5-thio-alpha-D-ribose 1-phosphate: step 5/6. Catalyzes 2 different reactions between oxygen and the acireductone 1,2-dihydroxy-3-keto-5-methylthiopentene (DHK-MTPene) depending upon the metal bound in the active site. Fe-containing acireductone dioxygenase (Fe-ARD) produces formate and 2-keto-4-methylthiobutyrate (KMTB), the alpha-ketoacid precursor of methionine in the methionine recycle pathway. Ni-containing acireductone dioxygenase (Ni-ARD) produces methylthiopropionate, carbon monoxide and formate, and does not lie on the methionine recycle pathway. The sequence is that of Acireductone dioxygenase 1 from Sorghum bicolor (Sorghum).